The primary structure comprises 442 residues: UDP-N-acetylmuramoylalanine--D-glutamate ligase (442 aa).

109 to 115 (GSNGKTT) lines the ATP pocket.

The protein belongs to the MurCDEF family.

It is found in the cytoplasm. The catalysed reaction is UDP-N-acetyl-alpha-D-muramoyl-L-alanine + D-glutamate + ATP = UDP-N-acetyl-alpha-D-muramoyl-L-alanyl-D-glutamate + ADP + phosphate + H(+). It functions in the pathway cell wall biogenesis; peptidoglycan biosynthesis. Its function is as follows. Cell wall formation. Catalyzes the addition of glutamate to the nucleotide precursor UDP-N-acetylmuramoyl-L-alanine (UMA). The polypeptide is UDP-N-acetylmuramoylalanine--D-glutamate ligase (Solibacter usitatus (strain Ellin6076)).